Reading from the N-terminus, the 546-residue chain is Cyclic GMP-AMP synthase-like receptor (546 aa).

A compositionally biased stretch (polar residues) spans 1–10 (MPVGSRQNRV). 2 disordered regions span residues 1 to 116 (MPVG…CASR) and 134 to 186 (AKQE…RLTN). Over residues 35-45 (YTERKERKDVQ) the composition is skewed to basic and acidic residues. Positions 69-80 (TSRTLRQTSQSR) are enriched in low complexity. 2 stretches are compositionally biased toward basic and acidic residues: residues 82 to 95 (EVLE…DCKK) and 145 to 174 (KEGY…DKAT). Over residues 175–186 (SHSTKGSFRLTN) the composition is skewed to polar residues. ATP contacts are provided by residues S243 and 255-257 (EFD). Mg(2+)-binding residues include E255, D257, and D374. Residues D374 and 428–435 (RTSFSLAE) each bind GTP. Residues 432 to 435 (SLAE), K455, and 470 to 474 (SYHLK) contribute to the ATP site.

The protein belongs to the mab-21 family. It depends on Mg(2+) as a cofactor. Mn(2+) is required as a cofactor.

The catalysed reaction is GTP + ATP = 2',3'-cGAMP + 2 diphosphate. The enzyme catalyses GTP + ATP = pppGp(2'-5')A + diphosphate. It catalyses the reaction pppGp(2'-5')A = 2',3'-cGAMP + diphosphate. Its function is as follows. Nucleotidyltransferase that catalyzes the formation of cyclic GMP-AMP (2',3'-cGAMP) from ATP and GTP and plays a key role in innate immunity. Directly binds some unknown ligand, activating the nucleotidyltransferase activity, leading to synthesis of 2',3'-cGAMP, a second messenger that binds to and activates Sting, thereby triggering the immune response via activation of the NF-kappa-B transcription factor. In Exaiptasia diaphana (Tropical sea anemone), this protein is Cyclic GMP-AMP synthase-like receptor.